The chain runs to 701 residues: Polyribonucleotide nucleotidyltransferase (701 aa).

Mg(2+)-binding residues include Asp-487 and Asp-493. The 60-residue stretch at 554-613 folds into the KH domain; that stretch reads PTMIAMKIDTDKIRDVIGKGGATIRAICEETKASIDIEDDGSIKIFGETKEAAEAARQRV. The S1 motif domain maps to 623–691; that stretch reads GKIYVGKVER…NRGRIKLSIK (69 aa).

Belongs to the polyribonucleotide nucleotidyltransferase family. Component of the RNA degradosome, which is a multiprotein complex involved in RNA processing and mRNA degradation. Mg(2+) serves as cofactor.

Its subcellular location is the cytoplasm. It catalyses the reaction RNA(n+1) + phosphate = RNA(n) + a ribonucleoside 5'-diphosphate. Involved in mRNA degradation. Catalyzes the phosphorolysis of single-stranded polyribonucleotides processively in the 3'- to 5'-direction. The polypeptide is Polyribonucleotide nucleotidyltransferase (Pseudomonas fluorescens (strain SBW25)).